The chain runs to 178 residues: Inorganic pyrophosphatase (178 aa).

The substrate site is built by Lys-31, Arg-45, and Tyr-57. Positions 67, 72, and 104 each coordinate Mg(2+). Residue Tyr-141 coordinates substrate.

The protein belongs to the PPase family. In terms of assembly, homohexamer. Mg(2+) serves as cofactor.

It is found in the cytoplasm. It catalyses the reaction diphosphate + H2O = 2 phosphate + H(+). Catalyzes the hydrolysis of inorganic pyrophosphate (PPi) forming two phosphate ions. In Leptospira interrogans serogroup Icterohaemorrhagiae serovar copenhageni (strain Fiocruz L1-130), this protein is Inorganic pyrophosphatase.